Reading from the N-terminus, the 418-residue chain is Equilibrative nucleotide transporter 6 (418 aa).

11 helical membrane passes run 19 to 39, 56 to 76, 86 to 106, 112 to 132, 142 to 162, 186 to 206, 264 to 284, 291 to 311, 326 to 346, 353 to 373, and 392 to 412; these read AMIV…SMLT, VLTL…AYHE, LIGY…DLAT, FGPY…DATV, LMCP…GALT, MFLA…AYVL, HAVN…GFLY, GLGA…DLVG, KLIT…YFTA, WMIM…VCIM, and LVIF…LWLI.

It belongs to the SLC29A/ENT transporter (TC 2.A.57) family. As to expression, expressed in leaves and siliques.

It is found in the cell membrane. Functionally, nucleoside transporter that can mediate uptake of adenosine, uridine, guanosine or cytidine when expressed in a heterologous system (yeast). The polypeptide is Equilibrative nucleotide transporter 6 (ENT6) (Arabidopsis thaliana (Mouse-ear cress)).